Consider the following 189-residue polypeptide: Pyridoxal 5'-phosphate synthase subunit PdxT (189 aa).

Position 46 to 48 (46 to 48 (GES)) interacts with L-glutamine. The Nucleophile role is filled by C78. Residues R107 and 136–137 (IR) contribute to the L-glutamine site. Catalysis depends on charge relay system residues H173 and E175.

This sequence belongs to the glutaminase PdxT/SNO family. In terms of assembly, in the presence of PdxS, forms a dodecamer of heterodimers. Only shows activity in the heterodimer.

It carries out the reaction aldehydo-D-ribose 5-phosphate + D-glyceraldehyde 3-phosphate + L-glutamine = pyridoxal 5'-phosphate + L-glutamate + phosphate + 3 H2O + H(+). The enzyme catalyses L-glutamine + H2O = L-glutamate + NH4(+). The protein operates within cofactor biosynthesis; pyridoxal 5'-phosphate biosynthesis. Functionally, catalyzes the hydrolysis of glutamine to glutamate and ammonia as part of the biosynthesis of pyridoxal 5'-phosphate. The resulting ammonia molecule is channeled to the active site of PdxS. This Roseiflexus sp. (strain RS-1) protein is Pyridoxal 5'-phosphate synthase subunit PdxT.